Consider the following 458-residue polypeptide: Lysine-rich nucleolar protein 1 (458 aa).

Residues 1–14 (MITKTHKVDLGLPE) are compositionally biased toward basic and acidic residues. Positions 1–21 (MITKTHKVDLGLPEKKKKKKV) are disordered. Lys7 is covalently cross-linked (Glycyl lysine isopeptide (Lys-Gly) (interchain with G-Cter in SUMO2)). Ser42 and Ser50 each carry phosphoserine. The disordered stretch occupies residues 46–305 (ATSPSKSVAH…ESGVAGDPWK (260 aa)). Basic residues predominate over residues 64 to 73 (VKKKKKKKKG). Lys101 is covalently cross-linked (Glycyl lysine isopeptide (Lys-Gly) (interchain with G-Cter in SUMO2)). At Ser111 the chain carries Phosphoserine. Lys130 participates in a covalent cross-link: Glycyl lysine isopeptide (Lys-Gly) (interchain with G-Cter in SUMO2). Ser132 carries the post-translational modification Phosphoserine. Over residues 145–155 (GKKLKKHKKEK) the composition is skewed to basic residues. The segment covering 173 to 192 (EAREARDVGDTCSVGKKDEE) has biased composition (basic and acidic residues). Residues 198–218 (QKRKRKSPREHNGKVKKKKKI) show a composition bias toward basic residues. Lys249 participates in a covalent cross-link: Glycyl lysine isopeptide (Lys-Gly) (interchain with G-Cter in SUMO1); alternate. A Glycyl lysine isopeptide (Lys-Gly) (interchain with G-Cter in SUMO2); alternate cross-link involves residue Lys249. At Ser265 the chain carries Phosphoserine. Residues 265 to 274 (SAKKKMKSKK) are compositionally biased toward basic residues. Glycyl lysine isopeptide (Lys-Gly) (interchain with G-Cter in SUMO2) cross-links involve residues Lys275, Lys287, and Lys305. The segment at 306 to 458 (EETDTDLEVV…NASKSVKLED (153 aa)) is interaction with ZNF106. Phosphothreonine is present on residues Thr308 and Thr310. Glycyl lysine isopeptide (Lys-Gly) (interchain with G-Cter in SUMO2) cross-links involve residues Lys319, Lys353, Lys373, Lys375, and Lys407. Over residues 336 to 353 (QEEIDRESGKTEASETRK) the composition is skewed to basic and acidic residues. Residues 336–355 (QEEIDRESGKTEASETRKWT) are disordered. Residue Arg430 is modified to Omega-N-methylarginine. Residue Lys442 forms a Glycyl lysine isopeptide (Lys-Gly) (interchain with G-Cter in SUMO2) linkage.

As to quaternary structure, interacts with ZNF106.

It localises to the nucleus. The protein localises to the nucleolus. This is Lysine-rich nucleolar protein 1 (KNOP1) from Homo sapiens (Human).